The following is a 112-amino-acid chain: Putative pterin-4-alpha-carbinolamine dehydratase (112 aa).

The protein belongs to the pterin-4-alpha-carbinolamine dehydratase family.

It catalyses the reaction (4aS,6R)-4a-hydroxy-L-erythro-5,6,7,8-tetrahydrobiopterin = (6R)-L-erythro-6,7-dihydrobiopterin + H2O. The chain is Putative pterin-4-alpha-carbinolamine dehydratase from Shewanella sp. (strain MR-7).